The chain runs to 35 residues: Photosystem II reaction center protein T (35 aa).

A helical transmembrane segment spans residues 3-23 (SVAYILILTLAIGVLFFAIAF).

Belongs to the PsbT family. PSII is composed of 1 copy each of membrane proteins PsbA, PsbB, PsbC, PsbD, PsbE, PsbF, PsbH, PsbI, PsbJ, PsbK, PsbL, PsbM, PsbT, PsbX, PsbY, PsbZ, Psb30/Ycf12, peripheral proteins PsbO, CyanoQ (PsbQ), PsbU, PsbV and a large number of cofactors. It forms dimeric complexes.

The protein localises to the cellular thylakoid membrane. In terms of biological role, found at the monomer-monomer interface of the photosystem II (PS II) dimer, plays a role in assembly and dimerization of PSII. PSII is a light-driven water plastoquinone oxidoreductase, using light energy to abstract electrons from H(2)O, generating a proton gradient subsequently used for ATP formation. In Nostoc sp. (strain PCC 7120 / SAG 25.82 / UTEX 2576), this protein is Photosystem II reaction center protein T.